A 230-amino-acid chain; its full sequence is Ion-translocating oxidoreductase complex subunit E (230 aa).

The next 5 helical transmembrane spans lie at 39-59, 69-89, 93-113, 124-144, and 182-202; these read LGLG…VSLV, IPVF…LMNA, GLYL…IIIG, VLPA…VLVV, and AFLL…LIAA.

This sequence belongs to the NqrDE/RnfAE family. In terms of assembly, the complex is composed of six subunits: RnfA, RnfB, RnfC, RnfD, RnfE and RnfG.

It is found in the cell inner membrane. Functionally, part of a membrane-bound complex that couples electron transfer with translocation of ions across the membrane. The chain is Ion-translocating oxidoreductase complex subunit E from Vibrio cholerae serotype O1 (strain ATCC 39315 / El Tor Inaba N16961).